Reading from the N-terminus, the 115-residue chain is Large ribosomal subunit protein bL19 (115 aa).

Belongs to the bacterial ribosomal protein bL19 family.

In terms of biological role, this protein is located at the 30S-50S ribosomal subunit interface and may play a role in the structure and function of the aminoacyl-tRNA binding site. The chain is Large ribosomal subunit protein bL19 (rplS) from Thermotoga maritima (strain ATCC 43589 / DSM 3109 / JCM 10099 / NBRC 100826 / MSB8).